The sequence spans 483 residues: Altronate oxidoreductase (483 aa).

18–29 (IIQFGEGNFLRA) contributes to the NAD(+) binding site.

It belongs to the mannitol dehydrogenase family. UxaB subfamily.

It catalyses the reaction D-altronate + NAD(+) = keto-D-tagaturonate + NADH + H(+). It functions in the pathway carbohydrate metabolism; pentose and glucuronate interconversion. The protein is Altronate oxidoreductase of Enterobacter sp. (strain 638).